A 253-amino-acid polypeptide reads, in one-letter code: MKILVAVKRVVDYAVKVRVRPDRTGVETASVKMSMNPFCEIAVEEALRLRESGAATEVVAATVGPSQSADTLRTALAMGADRAVHVLHDPDPSRPLLPLAVAKILRALALQENPGLVILGKQAIDDDCNQTGQMLAGLLNWPQGTFASKVILNKEKATVEREVDGGIETISLDLPAVITTDLRLNQPRYATLPNIMKAKSKVIKKVTPEDLDVDIRSDMEVVEVTEPPKRKAGVILSSVDELVDRLKNEARVL.

It belongs to the ETF beta-subunit/FixA family. Heterodimer of an alpha and a beta subunit. FAD is required as a cofactor. The cofactor is AMP.

Its subcellular location is the mitochondrion matrix. In terms of biological role, the electron transfer flavoprotein serves as a specific electron acceptor for several dehydrogenases, including five acyl-CoA dehydrogenases, glutaryl-CoA and sarcosine dehydrogenase. It transfers the electrons to the main mitochondrial respiratory chain via ETF-ubiquinone oxidoreductase (ETF dehydrogenase). This Oryza sativa subsp. japonica (Rice) protein is Electron transfer flavoprotein subunit beta, mitochondrial (ETFB).